Consider the following 305-residue polypeptide: Elongation factor Ts (305 aa).

Residues 79-82 (TDFV) form an involved in Mg(2+) ion dislocation from EF-Tu region.

The protein belongs to the EF-Ts family.

It is found in the cytoplasm. In terms of biological role, associates with the EF-Tu.GDP complex and induces the exchange of GDP to GTP. It remains bound to the aminoacyl-tRNA.EF-Tu.GTP complex up to the GTP hydrolysis stage on the ribosome. The polypeptide is Elongation factor Ts (Brucella suis biovar 1 (strain 1330)).